We begin with the raw amino-acid sequence, 280 residues long: 4-hydroxy-tetrahydrodipicolinate reductase (280 aa).

Residues 14 to 19, Asp-40, 106 to 108, and 130 to 133 each bind NAD(+); these read GAAGRM, ATT, and APSM. The active-site Proton donor/acceptor is the His-166. A (S)-2,3,4,5-tetrahydrodipicolinate-binding site is contributed by His-167. Catalysis depends on Lys-170, which acts as the Proton donor. 176-177 lines the (S)-2,3,4,5-tetrahydrodipicolinate pocket; sequence GT.

It belongs to the DapB family.

It localises to the cytoplasm. The enzyme catalyses (S)-2,3,4,5-tetrahydrodipicolinate + NAD(+) + H2O = (2S,4S)-4-hydroxy-2,3,4,5-tetrahydrodipicolinate + NADH + H(+). It carries out the reaction (S)-2,3,4,5-tetrahydrodipicolinate + NADP(+) + H2O = (2S,4S)-4-hydroxy-2,3,4,5-tetrahydrodipicolinate + NADPH + H(+). Its pathway is amino-acid biosynthesis; L-lysine biosynthesis via DAP pathway; (S)-tetrahydrodipicolinate from L-aspartate: step 4/4. Catalyzes the conversion of 4-hydroxy-tetrahydrodipicolinate (HTPA) to tetrahydrodipicolinate. The sequence is that of 4-hydroxy-tetrahydrodipicolinate reductase from Rhodopirellula baltica (strain DSM 10527 / NCIMB 13988 / SH1).